A 61-amino-acid polypeptide reads, in one-letter code: Large ribosomal subunit protein uL30 (61 aa).

The protein belongs to the universal ribosomal protein uL30 family. As to quaternary structure, part of the 50S ribosomal subunit.

In Chromohalobacter salexigens (strain ATCC BAA-138 / DSM 3043 / CIP 106854 / NCIMB 13768 / 1H11), this protein is Large ribosomal subunit protein uL30.